The chain runs to 83 residues: MANVEIYTKETCPYCHRAKALLSSKGVSFQELPIDGNAAKREEMIKRSGRTTVPQIFIDAQHIGGCDDLYALDARGGLDPLLK.

In terms of domain architecture, Glutaredoxin spans 2–83; the sequence is ANVEIYTKET…ARGGLDPLLK (82 aa). Cys-12 and Cys-15 are disulfide-bonded.

It belongs to the glutaredoxin family. In terms of assembly, monomer.

In terms of biological role, the disulfide bond functions as an electron carrier in the glutathione-dependent synthesis of deoxyribonucleotides by the enzyme ribonucleotide reductase. In addition, it is also involved in reducing some disulfides in a coupled system with glutathione reductase. The protein is Glutaredoxin 3 (grxC) of Escherichia coli O157:H7.